The sequence spans 556 residues: Formate--tetrahydrofolate ligase (556 aa).

ATP is bound at residue Thr65–Ser72.

Belongs to the formate--tetrahydrofolate ligase family.

The catalysed reaction is (6S)-5,6,7,8-tetrahydrofolate + formate + ATP = (6R)-10-formyltetrahydrofolate + ADP + phosphate. It participates in one-carbon metabolism; tetrahydrofolate interconversion. This is Formate--tetrahydrofolate ligase from Enterococcus faecalis (strain ATCC 700802 / V583).